Reading from the N-terminus, the 92-residue chain is DNA-directed RNA polymerase subunit omega (92 aa).

Belongs to the RNA polymerase subunit omega family. As to quaternary structure, the RNAP catalytic core consists of 2 alpha, 1 beta, 1 beta' and 1 omega subunit. When a sigma factor is associated with the core the holoenzyme is formed, which can initiate transcription.

It carries out the reaction RNA(n) + a ribonucleoside 5'-triphosphate = RNA(n+1) + diphosphate. Functionally, promotes RNA polymerase assembly. Latches the N- and C-terminal regions of the beta' subunit thereby facilitating its interaction with the beta and alpha subunits. This Shewanella amazonensis (strain ATCC BAA-1098 / SB2B) protein is DNA-directed RNA polymerase subunit omega.